The following is a 462-amino-acid chain: Gamma-aminobutyric acid receptor subunit alpha-5 (462 aa).

Residues 1–31 form the signal peptide; that stretch reads MDNGMFSGFIMIKNLLLFCISMNLSSHFGFS. The Extracellular portion of the chain corresponds to 32–260; sequence QMPTSSVKDE…FHLKRKIGYF (229 aa). N-linked (GlcNAc...) asparagine glycosylation is present at asparagine 45. 4-aminobutanoate is bound at residue arginine 101. An N-linked (GlcNAc...) asparagine glycan is attached at asparagine 145. Threonine 164 lines the 4-aminobutanoate pocket. A disulfide bond links cysteine 173 and cysteine 187. N-linked (GlcNAc...) asparagine glycans are attached at residues asparagine 207 and asparagine 236. Residues 261-281 traverse the membrane as a helical segment; sequence VIQTYLPCIMTVILSQVSFWL. Over 282 to 286 the chain is Cytoplasmic; that stretch reads NRESV. The helical transmembrane segment at 287–308 threads the bilayer; it reads PARTVFGVTTVLTMTTLSISAR. Topologically, residues 309-318 are extracellular; sequence NSLPKVAYAT. A helical membrane pass occupies residues 319–340; it reads AMDWFIAVCYAFVFSALIEFAT. Residues 341–427 are Cytoplasmic-facing; the sequence is VNYFTKRGWA…TYNSISKIDK (87 aa). Lysine 355 participates in a covalent cross-link: Glycyl lysine isopeptide (Lys-Gly) (interchain with G-Cter in ubiquitin). The tract at residues 377-412 is disordered; that stretch reads FTTGKMSHPPNIPKEQTPAGTSNTTSVSVKPSEEKT. The chain crosses the membrane as a helical span at residues 428–448; sequence MSRIVFPVLFGTFNLVYWATY. The Extracellular segment spans residues 449 to 462; sequence LNREPVIKGAASPK.

This sequence belongs to the ligand-gated ion channel (TC 1.A.9) family. Gamma-aminobutyric acid receptor (TC 1.A.9.5) subfamily. GABRA5 sub-subfamily. Heteropentamer, formed by a combination of alpha (GABRA1-6), beta (GABRB1-3), gamma (GABRG1-3), delta (GABRD), epsilon (GABRE), rho (GABRR1-3), pi (GABRP) and theta (GABRQ) chains, each subunit exhibiting distinct physiological and pharmacological properties.

The protein localises to the postsynaptic cell membrane. It is found in the cell membrane. The catalysed reaction is chloride(in) = chloride(out). Its function is as follows. Alpha subunit of the heteropentameric ligand-gated chloride channel gated by gamma-aminobutyric acid (GABA), a major inhibitory neurotransmitter in the brain. GABA-gated chloride channels, also named GABA(A) receptors (GABAAR), consist of five subunits arranged around a central pore and contain GABA active binding site(s) located at the alpha and beta subunit interface(s). When activated by GABA, GABAARs selectively allow the flow of chloride anions across the cell membrane down their electrochemical gradient. GABAARs containing alpha-5/GABRA5 subunits are mainly extrasynaptic and contribute to the tonic GABAergic inhibition in the hippocampus. Extrasynaptic alpha-5-containing GABAARs in CA1 pyramidal neurons play a role in learning and memory processes. This Homo sapiens (Human) protein is Gamma-aminobutyric acid receptor subunit alpha-5.